The primary structure comprises 197 residues: Casparian strip membrane protein 3 (197 aa).

Topologically, residues 1–35 (MSARVDIPADTSAAAKGTAPLIAASTHVKGGYKKG) are cytoplasmic. The helical transmembrane segment at 36–56 (LAIFDLVLRLGAVVTALAAAA) threads the bilayer. At 57–85 (TMGTTDQTLPFFTQFFQFQASYDDLPTFQ) the chain is on the extracellular side. A helical transmembrane segment spans residues 86–106 (FFVIAMAIVSGYLVLSLPFSI). Residues 107 to 119 (VAIIRPHATGPRL) lie on the Cytoplasmic side of the membrane. Residues 120-140 (LLIILDTVALTLNTAAAAAAV) traverse the membrane as a helical segment. At 141–171 (AIVDLAQNGNSSANWLGICQQFGDFCQKASG) the chain is on the extracellular side. An N-linked (GlcNAc...) asparagine glycan is attached at asparagine 150. A helical membrane pass occupies residues 172–192 (AVVASFIAAGVLLFLIVISAL). Residues 193-197 (ALRKR) are Cytoplasmic-facing.

It belongs to the Casparian strip membrane proteins (CASP) family. Homodimer and heterodimers.

It localises to the cell membrane. Its function is as follows. Regulates membrane-cell wall junctions and localized cell wall deposition. Required for establishment of the Casparian strip membrane domain (CSD) and the subsequent formation of Casparian strips, a cell wall modification of the root endodermis that determines an apoplastic barrier between the intraorganismal apoplasm and the extraorganismal apoplasm and prevents lateral diffusion. This chain is Casparian strip membrane protein 3, found in Populus trichocarpa (Western balsam poplar).